Here is a 557-residue protein sequence, read N- to C-terminus: Acid-sensing ion channel 1B (557 aa).

At 1–98 (MVRITCTISF…SIRQGLWALV (98 aa)) the chain is on the cytoplasmic side. Residues 36-45 (KDGEQGKYQE) show a composition bias toward basic and acidic residues. The interval 36-57 (KDGEQGKYQEEGDDPDAYDGPE) is disordered. The span at 46-57 (EGDDPDAYDGPE) shows a compositional bias: acidic residues. A helical transmembrane segment spans residues 99 to 115 (FLLAISMFLLQVVDRVI). The Extracellular portion of the chain corresponds to 116-460 (YYLQYDYVTL…ETIEQKKAYE (345 aa)). N-linked (GlcNAc...) asparagine glycosylation is found at asparagine 133 and asparagine 194. Intrachain disulfides connect cysteine 142/cysteine 229, cysteine 207/cysteine 214, cysteine 325/cysteine 400, cysteine 343/cysteine 396, cysteine 347/cysteine 394, cysteine 356/cysteine 378, and cysteine 358/cysteine 370. 2 N-linked (GlcNAc...) asparagine glycosylation sites follow: asparagine 401 and asparagine 428. Residues 461-491 (LAGLLGDIGGQMGLFIGASILTILELFDYLY) form a discontinuously helical membrane-spanning segment. Positions 477 to 479 (GAS) match the GAS motif; ion selectivity filter motif. The Cytoplasmic portion of the chain corresponds to 492–557 (EVIKFKLCRC…GQGNFEDFTC (66 aa)).

Belongs to the amiloride-sensitive sodium channel (TC 1.A.6) family. ASIC1 subfamily. Homotrimer. Heterotrimer; with other ASIC proteins producing channel with different properties. In terms of tissue distribution, expressed in central nervous system.

The protein resides in the cell membrane. It localises to the postsynaptic cell membrane. The protein localises to the cell projection. Its subcellular location is the dendrite. It catalyses the reaction Na(+)(in) = Na(+)(out). The catalysed reaction is K(+)(in) = K(+)(out). The enzyme catalyses Li(+)(in) = Li(+)(out). It carries out the reaction Ca(2+)(in) = Ca(2+)(out). Inhibited by the diuretic drug amiloride. In terms of biological role, forms voltage-independent, pH-gated trimeric sodium channels that act as postsynaptic excitatory receptors in the nervous system, playing a crucial role in regulating synaptic plasticity, learning, and memory. Upon extracellular pH drop this channel elicits transient, fast activating, and completely desensitizing inward currents. Displays high selectivity for sodium ions but can also permit the permeation of other cations. The polypeptide is Acid-sensing ion channel 1B (asic1b) (Danio rerio (Zebrafish)).